The following is a 155-amino-acid chain: Large ribosomal subunit protein uL30 (155 aa).

The protein belongs to the universal ribosomal protein uL30 family. Part of the 50S ribosomal subunit.

In Cenarchaeum symbiosum (strain A), this protein is Large ribosomal subunit protein uL30.